The chain runs to 709 residues: Polyribonucleotide nucleotidyltransferase (709 aa).

Residues aspartate 482 and aspartate 488 each coordinate Mg(2+). The KH domain maps to 549-608; it reads PRIITMSIDPDKIREVIGPGGKVINKIIAETGVKIDIEDDGRIFIAATDTEAANKAVRII. The region spanning 618 to 686 is the S1 motif domain; sequence GKVYTGKVTR…KQGRINLSRK (69 aa).

The protein belongs to the polyribonucleotide nucleotidyltransferase family. Requires Mg(2+) as cofactor.

It localises to the cytoplasm. The catalysed reaction is RNA(n+1) + phosphate = RNA(n) + a ribonucleoside 5'-diphosphate. Involved in mRNA degradation. Catalyzes the phosphorolysis of single-stranded polyribonucleotides processively in the 3'- to 5'-direction. The polypeptide is Polyribonucleotide nucleotidyltransferase (Heliobacterium modesticaldum (strain ATCC 51547 / Ice1)).